Here is a 327-residue protein sequence, read N- to C-terminus: ATP-dependent 6-phosphofructokinase (327 aa).

Glycine 12 contributes to the ATP binding site. ADP is bound by residues 22–26 and 55–60; these read RGVVR and RYSVSD. ATP contacts are provided by residues 73–74 and 103–106; these read RF and GDGS. Mg(2+) is bound at residue aspartate 104. Residue 127–129 participates in substrate binding; it reads TID. The Proton acceptor role is filled by aspartate 129. Arginine 156 is an ADP binding site. Residues arginine 164 and 171-173 each bind substrate; that span reads MGR. ADP is bound by residues 187–189, lysine 213, and 215–217; these read GCE and KKH. Residues glutamate 224, arginine 245, and 251 to 254 each bind substrate; that span reads HIQR.

This sequence belongs to the phosphofructokinase type A (PFKA) family. ATP-dependent PFK group I subfamily. Prokaryotic clade 'B1' sub-subfamily. As to quaternary structure, homotetramer. Requires Mg(2+) as cofactor.

The protein resides in the cytoplasm. It catalyses the reaction beta-D-fructose 6-phosphate + ATP = beta-D-fructose 1,6-bisphosphate + ADP + H(+). Its pathway is carbohydrate degradation; glycolysis; D-glyceraldehyde 3-phosphate and glycerone phosphate from D-glucose: step 3/4. Allosterically activated by ADP and other diphosphonucleosides, and allosterically inhibited by phosphoenolpyruvate. In terms of biological role, catalyzes the phosphorylation of D-fructose 6-phosphate to fructose 1,6-bisphosphate by ATP, the first committing step of glycolysis. The polypeptide is ATP-dependent 6-phosphofructokinase (Yersinia pseudotuberculosis serotype IB (strain PB1/+)).